Reading from the N-terminus, the 166-residue chain is Coiled-coil domain-containing protein 12 (166 aa).

N-acetylmethionine is present on methionine 1. Residues 8-28 adopt a coiled-coil conformation; it reads VGRLEEEALRRKERLKALREK. A compositionally biased stretch (basic and acidic residues) spans 21–53; it reads RLKALREKTGRKDREDGEPQTKQLREEGEEVGK. Positions 21–55 are disordered; sequence RLKALREKTGRKDREDGEPQTKQLREEGEEVGKHR. Position 53 is an N6-acetyllysine (lysine 53). Residue lysine 94 forms a Glycyl lysine isopeptide (Lys-Gly) (interchain with G-Cter in SUMO2) linkage. The stretch at 115–144 forms a coiled coil; sequence DLKRDVAKKLEKLEKRTQRAIAELIRERLK. The segment at 146–166 is disordered; sequence QEDSLASAVDATTGQEACDSD. Serine 149 and serine 165 each carry phosphoserine.

This chain is Coiled-coil domain-containing protein 12 (Ccdc12), found in Mus musculus (Mouse).